Reading from the N-terminus, the 512-residue chain is MKEYQIHLELDRSQQNNFLYPLLFREYIYALAHDHGLNRSTIPLENGGYDNKSSSLSVKRLISRTYQRIHLSIYAKDSNPNQFIGHNNKFYSQMISEGFSVIVEIPFSLRLVAFLEGKEMAKSQNFQSIHSIFPFFENNFSHLHYVLDVLIPYPIRPEILVRTFRYWVKDASSLHLLRFFLHEYFNWNSLITPKKSNSIFSTRNPRFFLFLYNSHVYEYESIFFFLRNQSSHLRSTSSGLLFERISFYGKVEDLVQVFVNDFQDNLWLFKHPIMHYVRYQGKSVLASKDMPLLMNKWKYYLVNLWQWHFHVWSQPGRIHINHLYKDYIDFLGYLSRGRLNTLVVRSQMLENAFLIDNAMKQFETTVPIIPLIGSLTTARFCNSLGHPISKPTWADSSDSYIIDRFMRICRNLSHYHSGSSKKKSLYRIKYILRVSCVKSLVRKHKSTVRVFLKRLGSEFLEEFFTEEEHVLSLIFPRALFTSRRLYRGRVWYLDIICINDLVNHDKLEIVPN.

This sequence belongs to the intron maturase 2 family. MatK subfamily.

Its subcellular location is the plastid. It is found in the chloroplast. In terms of biological role, usually encoded in the trnK tRNA gene intron. Probably assists in splicing its own and other chloroplast group II introns. This chain is Maturase K, found in Acer campestre (Field maple).